Consider the following 530-residue polypeptide: Alkali-sensitive linkage protein 1 (530 aa).

Residues 1 to 18 (MRTTFATVALAFLSTVGA) form the signal peptide. Asn-55 carries N-linked (GlcNAc...) asparagine glycosylation. The segment at 69–90 (SVTESSDDGASTALPTTSTESV) is disordered. N-linked (GlcNAc...) asparagine glycosylation is found at Asn-120 and Asn-128.

It is found in the endoplasmic reticulum. The protein resides in the golgi apparatus. Its subcellular location is the secreted. The protein localises to the cell wall. This is Alkali-sensitive linkage protein 1 (asl1) from Schizosaccharomyces pombe (strain 972 / ATCC 24843) (Fission yeast).